The chain runs to 1207 residues: Plasma membrane calcium-transporting ATPase 4 (1207 aa).

Residues 1-100 (MTNPTEHTLP…KTFLELVWEA (100 aa)) lie on the Cytoplasmic side of the membrane. Residue Ser-13 is modified to Phosphoserine. Residues 101-121 (LQDVTLIILEIAAIISLVLSF) form a helical membrane-spanning segment. Over 122–147 (YRPPGGENEQCGLAVTSPEDEGEAEA) the chain is Extracellular. Residues 148–168 (GWIEGAAILFSVIIVVLVTAF) traverse the membrane as a helical segment. The Cytoplasmic portion of the chain corresponds to 169–368 (NDWSKEKQFR…LAVQIGKAGL (200 aa)). A disordered region spans residues 294–317 (EEEKKKKGKKQGVPENRNKAKTQD). Residues Ser-328 and Ser-334 each carry the phosphoserine modification. Residues 369–389 (IMSAITVLILILYFVIDNFVI) traverse the membrane as a helical segment. Topologically, residues 390 to 408 (QRRPWLAECTPIYVQYFVK) are extracellular. The chain crosses the membrane as a helical span at residues 409-429 (FFIIGVTVLVVAVPEGLPLAV). At 430 to 843 (TISLAYSVKK…RNVYDSISKF (414 aa)) the chain is on the cytoplasmic side. Asp-465 acts as the 4-aspartylphosphate intermediate in catalysis. Positions 785 and 789 each coordinate Mg(2+). The chain crosses the membrane as a helical span at residues 844–864 (LQFQLTVNVVAVIVAFTGACI). Over 865–871 (TQDSPLK) the chain is Extracellular. A helical membrane pass occupies residues 872–892 (AVQMLWVNLIMDTFASLALAT). Over 893 to 918 (EPPTDSLLKRRPYGRNKPLISRTMMK) the chain is Cytoplasmic. Residues 919 to 939 (NILGHAVYQLTVIFFLVFAGE) form a helical membrane-spanning segment. Residues 940–957 (KFFDIDSGRRAPLHSPPS) lie on the Extracellular side of the membrane. The helical transmembrane segment at 958–977 (QHYTIIFNTFVLMQLFNEIN) threads the bilayer. The Cytoplasmic portion of the chain corresponds to 978–994 (SRKIHGERNVFSGIFRN). The chain crosses the membrane as a helical span at residues 995–1015 (LIFCSVVLGTFISQIIIVEFG). Over 1016 to 1028 (GKPFSCTKLTLSQ) the chain is Extracellular. The helical transmembrane segment at 1029 to 1049 (WFWCLFIGIGELLWGQVISTI) threads the bilayer. At 1050–1207 (PTQSLKFLKE…SPLHSLETSV (158 aa)) the chain is on the cytoplasmic side. The interval 1086-1103 (LRRGQILWFRGLNRIQTQ) is calmodulin-binding subdomain A. A Phosphothreonine; by PKC modification is found at Thr-1102. The segment at 1104–1113 (IKVVKAFHSS) is calmodulin-binding subdomain B. Residues 1159–1181 (VSKPGTKTSSLDGEVTPQTNKNN) form a disordered region. Residues 1163–1181 (GTKTSSLDGEVTPQTNKNN) are compositionally biased toward polar residues.

This sequence belongs to the cation transport ATPase (P-type) (TC 3.A.3) family. Type IIB subfamily. Interacts with PDZD11. Interacts with SLC35G1 and STIM1. Interacts with calmodulin. In terms of tissue distribution, isoform 1 is detected in brain, heart, liver, testis and epididymis. Isoform 2 is detected in brain (at protein level), heart, seminal vesicle and epididymis. There is a shift in expression from isoform 1 to isoform 2 along the length of the epididymis from caput to cauda (at protein level).

It localises to the cell membrane. It is found in the cell projection. The protein localises to the cilium. Its subcellular location is the flagellum membrane. The enzyme catalyses Ca(2+)(in) + ATP + H2O = Ca(2+)(out) + ADP + phosphate + H(+). With respect to regulation, activated by calcium/calmodulin. Calcium/calmodulin-regulated and magnesium-dependent enzyme that catalyzes the hydrolysis of ATP coupled with the transport of calcium out of the cell. By regulating sperm cells calcium homeostasis, may play a role in sperm motility. This is Plasma membrane calcium-transporting ATPase 4 from Bos taurus (Bovine).